We begin with the raw amino-acid sequence, 484 residues long: Proline--tRNA ligase (484 aa).

The protein belongs to the class-II aminoacyl-tRNA synthetase family. ProS type 3 subfamily. Homodimer.

Its subcellular location is the cytoplasm. The catalysed reaction is tRNA(Pro) + L-proline + ATP = L-prolyl-tRNA(Pro) + AMP + diphosphate. Catalyzes the attachment of proline to tRNA(Pro) in a two-step reaction: proline is first activated by ATP to form Pro-AMP and then transferred to the acceptor end of tRNA(Pro). This chain is Proline--tRNA ligase, found in Haloarcula marismortui (strain ATCC 43049 / DSM 3752 / JCM 8966 / VKM B-1809) (Halobacterium marismortui).